Consider the following 155-residue polypeptide: Ribosomal RNA large subunit methyltransferase H (155 aa).

Residues Leu-72, Gly-103, and 122 to 127 contribute to the S-adenosyl-L-methionine site; that span reads LSPLTL.

Belongs to the RNA methyltransferase RlmH family. In terms of assembly, homodimer.

Its subcellular location is the cytoplasm. The catalysed reaction is pseudouridine(1915) in 23S rRNA + S-adenosyl-L-methionine = N(3)-methylpseudouridine(1915) in 23S rRNA + S-adenosyl-L-homocysteine + H(+). Its function is as follows. Specifically methylates the pseudouridine at position 1915 (m3Psi1915) in 23S rRNA. In Actinobacillus pleuropneumoniae serotype 5b (strain L20), this protein is Ribosomal RNA large subunit methyltransferase H.